The following is a 329-amino-acid chain: Putative L-ascorbate peroxidase 6 (329 aa).

His123 (proton acceptor) is an active-site residue. Heme b is bound at residue His244.

Belongs to the peroxidase family. Ascorbate peroxidase subfamily. Heme b serves as cofactor.

It carries out the reaction L-ascorbate + H2O2 = L-dehydroascorbate + 2 H2O. Plays a key role in hydrogen peroxide removal. This chain is Putative L-ascorbate peroxidase 6 (APX6), found in Arabidopsis thaliana (Mouse-ear cress).